A 485-amino-acid chain; its full sequence is Glutamate--tRNA ligase (485 aa).

The short motif at 10–20 (PSPTGHLHIGN) is the 'HIGH' region element. A 'KMSKS' region motif is present at residues 253 to 257 (KLSKR). Residue Lys-256 coordinates ATP.

Belongs to the class-I aminoacyl-tRNA synthetase family. Glutamate--tRNA ligase type 1 subfamily. Monomer.

The protein localises to the cytoplasm. The catalysed reaction is tRNA(Glu) + L-glutamate + ATP = L-glutamyl-tRNA(Glu) + AMP + diphosphate. In terms of biological role, catalyzes the attachment of glutamate to tRNA(Glu) in a two-step reaction: glutamate is first activated by ATP to form Glu-AMP and then transferred to the acceptor end of tRNA(Glu). This chain is Glutamate--tRNA ligase, found in Enterococcus faecalis (strain ATCC 700802 / V583).